Consider the following 102-residue polypeptide: MMEIGLNHYLVLSTILFAIGLVGVMRRKNLLMLFFATEILLNSVNISFAAISHYYGDLTGQMFAFFVIAIAASEVAVGLGLLIVWHKKHNNIDLDNMSTMRG.

Transmembrane regions (helical) follow at residues 4–24 (IGLNHYLVLSTILFAIGLVGV), 31–51 (LMLFFATEILLNSVNISFAAI), and 65–85 (FFVIAIAASEVAVGLGLLIVW).

It belongs to the complex I subunit 4L family. In terms of assembly, NDH-1 is composed of 14 different subunits. Subunits NuoA, H, J, K, L, M, N constitute the membrane sector of the complex.

The protein localises to the cell inner membrane. It catalyses the reaction a quinone + NADH + 5 H(+)(in) = a quinol + NAD(+) + 4 H(+)(out). Its function is as follows. NDH-1 shuttles electrons from NADH, via FMN and iron-sulfur (Fe-S) centers, to quinones in the respiratory chain. The immediate electron acceptor for the enzyme in this species is believed to be ubiquinone. Couples the redox reaction to proton translocation (for every two electrons transferred, four hydrogen ions are translocated across the cytoplasmic membrane), and thus conserves the redox energy in a proton gradient. The polypeptide is NADH-quinone oxidoreductase subunit K (Sulfurimonas denitrificans (strain ATCC 33889 / DSM 1251) (Thiomicrospira denitrificans (strain ATCC 33889 / DSM 1251))).